We begin with the raw amino-acid sequence, 137 residues long: MHELSIACEIFEQVKVTAEAHGATEVKHVTLQMGRLSHTNPEQLSFCFKTLAEGSIAENADLIVEMVPPTLECECGYTGTIDQERIRESNELTSELLAYIAAMDCPVCGKQAHIAGGRELIIKSIEIETENENESQR.

Histidine 2 contributes to the Ni(2+) binding site. The Zn(2+) site is built by cysteine 73, cysteine 75, cysteine 105, and cysteine 108.

Belongs to the HypA/HybF family.

Its function is as follows. Involved in the maturation of [NiFe] hydrogenases. Required for nickel insertion into the metal center of the hydrogenase. This chain is Hydrogenase maturation factor HypA, found in Methanosarcina mazei (strain ATCC BAA-159 / DSM 3647 / Goe1 / Go1 / JCM 11833 / OCM 88) (Methanosarcina frisia).